The following is a 2417-amino-acid chain: Protein pad-1 (2417 aa).

4 disordered regions span residues 409–437, 449–475, 994–1029, and 1957–2032; these read SSNS…DREG, SNKD…PDEE, TSTG…DDDT, and SMSN…RRDP. 2 stretches are compositionally biased toward low complexity: residues 456–468 and 1002–1024; these read TSVT…NASS and DPSA…VVPA. Residues 1969 to 1982 show a composition bias toward polar residues; the sequence is DNPSGSTRNSTLSL. The segment covering 2003–2014 has biased composition (basic and acidic residues); the sequence is SKSENMKIEKKS. Residues 2015 to 2025 show a composition bias toward polar residues; that stretch reads SSNLRASIKDT.

The protein belongs to the DOP1 family.

Functionally, may be involved in protein traffic between late Golgi and early endosomes. Essential for cell patterning during gastrulation. The sequence is that of Protein pad-1 (pad-1) from Caenorhabditis elegans.